Reading from the N-terminus, the 745-residue chain is Elongation factor G, mitochondrial (745 aa).

The region spanning 40–317 (ERIRNIGISA…AVLDYLPNPG (278 aa)) is the tr-type G domain. GTP contacts are provided by residues 49 to 56 (AHIDSGKT), 116 to 120 (DTPGH), and 170 to 173 (NKLD).

Belongs to the TRAFAC class translation factor GTPase superfamily. Classic translation factor GTPase family. EF-G/EF-2 subfamily.

It localises to the mitochondrion. Its pathway is protein biosynthesis; polypeptide chain elongation. Its function is as follows. Mitochondrial GTPase that catalyzes the GTP-dependent ribosomal translocation step during translation elongation. During this step, the ribosome changes from the pre-translocational (PRE) to the post-translocational (POST) state as the newly formed A-site-bound peptidyl-tRNA and P-site-bound deacylated tRNA move to the P and E sites, respectively. Catalyzes the coordinated movement of the two tRNA molecules, the mRNA and conformational changes in the ribosome. Essential during development as it acts as a retrograde signal from mitochondria to the nucleus to slow down cell proliferation if mitochondrial energy output is low. The protein is Elongation factor G, mitochondrial of Drosophila erecta (Fruit fly).